The chain runs to 185 residues: Ribonuclease HII (185 aa).

One can recognise an RNase H type-2 domain in the interval 1 to 185; sequence MIILGIDEAG…KSYKPIQLLL (185 aa). Asp7, Glu8, and Asp99 together coordinate a divalent metal cation.

It belongs to the RNase HII family. Mn(2+) serves as cofactor. The cofactor is Mg(2+).

Its subcellular location is the cytoplasm. The enzyme catalyses Endonucleolytic cleavage to 5'-phosphomonoester.. Functionally, endonuclease that specifically degrades the RNA of RNA-DNA hybrids. This Francisella philomiragia subsp. philomiragia (strain ATCC 25017 / CCUG 19701 / FSC 153 / O#319-036) protein is Ribonuclease HII.